A 446-amino-acid polypeptide reads, in one-letter code: N-succinylarginine dihydrolase (446 aa).

Residues 19-28 (AGLSFGNVAS), Asn-110, and 137-138 (HR) each bind substrate. Residue Glu-174 is part of the active site. Substrate is bound at residue Arg-213. The active site involves His-249. Substrate contacts are provided by Asp-251 and Asn-364. Cys-370 acts as the Nucleophile in catalysis.

The protein belongs to the succinylarginine dihydrolase family. In terms of assembly, homodimer.

It carries out the reaction N(2)-succinyl-L-arginine + 2 H2O + 2 H(+) = N(2)-succinyl-L-ornithine + 2 NH4(+) + CO2. The protein operates within amino-acid degradation; L-arginine degradation via AST pathway; L-glutamate and succinate from L-arginine: step 2/5. In terms of biological role, catalyzes the hydrolysis of N(2)-succinylarginine into N(2)-succinylornithine, ammonia and CO(2). This is N-succinylarginine dihydrolase from Burkholderia orbicola (strain MC0-3).